The primary structure comprises 286 residues: Bifunctional protein FolD (286 aa).

NADP(+) is bound by residues 165-167 (GRS), Ser-190, and Val-231.

The protein belongs to the tetrahydrofolate dehydrogenase/cyclohydrolase family. Homodimer.

It carries out the reaction (6R)-5,10-methylene-5,6,7,8-tetrahydrofolate + NADP(+) = (6R)-5,10-methenyltetrahydrofolate + NADPH. The enzyme catalyses (6R)-5,10-methenyltetrahydrofolate + H2O = (6R)-10-formyltetrahydrofolate + H(+). It participates in one-carbon metabolism; tetrahydrofolate interconversion. Functionally, catalyzes the oxidation of 5,10-methylenetetrahydrofolate to 5,10-methenyltetrahydrofolate and then the hydrolysis of 5,10-methenyltetrahydrofolate to 10-formyltetrahydrofolate. This chain is Bifunctional protein FolD, found in Bacillus cereus (strain B4264).